The chain runs to 264 residues: Teichoic acids export ATP-binding protein TagH (264 aa).

One can recognise an ABC transporter domain in the interval 24–243 (IKDALIPKNK…YEAFLKTFKK (220 aa)). An ATP-binding site is contributed by 57 to 64 (GINGSGKS).

The protein belongs to the ABC transporter superfamily. Teichoic acids exporter (TC 3.A.1.104.1) family. In terms of assembly, the complex is composed of two ATP-binding proteins (TagH) and two transmembrane proteins (TagG).

The protein localises to the cell membrane. The catalysed reaction is ATP + H2O + teichoic acidSide 1 = ADP + phosphate + teichoic acidSide 2.. Functionally, part of the ABC transporter complex TagGH involved in teichoic acids export. Responsible for energy coupling to the transport system. The polypeptide is Teichoic acids export ATP-binding protein TagH (Staphylococcus epidermidis (strain ATCC 35984 / DSM 28319 / BCRC 17069 / CCUG 31568 / BM 3577 / RP62A)).